The following is a 301-amino-acid chain: Homoserine kinase (301 aa).

Residue 81 to 91 participates in ATP binding; that stretch reads RPSSGLGSSAA.

It belongs to the GHMP kinase family. Homoserine kinase subfamily.

It is found in the cytoplasm. The enzyme catalyses L-homoserine + ATP = O-phospho-L-homoserine + ADP + H(+). Its pathway is amino-acid biosynthesis; L-threonine biosynthesis; L-threonine from L-aspartate: step 4/5. In terms of biological role, catalyzes the ATP-dependent phosphorylation of L-homoserine to L-homoserine phosphate. The sequence is that of Homoserine kinase from Halobacterium salinarum (strain ATCC 29341 / DSM 671 / R1).